We begin with the raw amino-acid sequence, 341 residues long: Probable sulfurtransferase (341 aa).

The Zn(2+) site is built by C40, C42, C58, and C61. G88 is a binding site for ATP. [4Fe-4S] cluster contacts are provided by C176 and C179. Residues R183 and G202 each coordinate ATP. A [4Fe-4S] cluster-binding site is contributed by C267. C316, C319, C328, and C331 together coordinate Zn(2+).

Belongs to the TtcA family. [4Fe-4S] cluster is required as a cofactor. Requires Mg(2+) as cofactor.

The sequence is that of Probable sulfurtransferase from Methanocaldococcus jannaschii (strain ATCC 43067 / DSM 2661 / JAL-1 / JCM 10045 / NBRC 100440) (Methanococcus jannaschii).